The chain runs to 268 residues: Putative hydro-lyase ABAYE2440 (268 aa).

This sequence belongs to the D-glutamate cyclase family.

In Acinetobacter baumannii (strain AYE), this protein is Putative hydro-lyase ABAYE2440.